The chain runs to 358 residues: 3-dehydroquinate synthase (358 aa).

NAD(+)-binding positions include G102–D106, T126–T127, K138, and K147. Positions 180, 243, and 260 each coordinate Zn(2+).

It belongs to the sugar phosphate cyclases superfamily. Dehydroquinate synthase family. It depends on Co(2+) as a cofactor. The cofactor is Zn(2+). NAD(+) serves as cofactor.

The protein resides in the cytoplasm. It carries out the reaction 7-phospho-2-dehydro-3-deoxy-D-arabino-heptonate = 3-dehydroquinate + phosphate. The protein operates within metabolic intermediate biosynthesis; chorismate biosynthesis; chorismate from D-erythrose 4-phosphate and phosphoenolpyruvate: step 2/7. Its function is as follows. Catalyzes the conversion of 3-deoxy-D-arabino-heptulosonate 7-phosphate (DAHP) to dehydroquinate (DHQ). The polypeptide is 3-dehydroquinate synthase (Shouchella clausii (strain KSM-K16) (Alkalihalobacillus clausii)).